The following is a 139-amino-acid chain: MACGKTESGDDSGRFGRTGAGMFGFIMPGFVGIFRLSFFLLLSFAMASGSSSPASVPVSVAASVPDTTVNKIVISDGSEAHNINEFYDVKCHSHFYGLSVSSFASIWMMVNAIVFICAFGVFMRHWCYKAFTSDTAKGY.

Over 1 to 100 (MACGKTESGD…CHSHFYGLSV (100 aa)) the chain is Virion surface. A helical membrane pass occupies residues 101–121 (SSFASIWMMVNAIVFICAFGV). Residues 122 to 139 (FMRHWCYKAFTSDTAKGY) lie on the Intravirion side of the membrane.

Belongs to the herpesviridae glycoprotein N family. In terms of assembly, interacts (via N-terminus) with gM (via N-terminus). The gM-gN heterodimer forms the gCII complex.

It is found in the virion membrane. The protein localises to the host membrane. The protein resides in the host Golgi apparatus. It localises to the host trans-Golgi network. Its function is as follows. Envelope glycoprotein necessary for proper maturation of gM and modulation of its membrane fusion activity. Also plays a critical role in virion morphogenesis. The chain is Envelope glycoprotein N from Mus musculus (Mouse).